Consider the following 232-residue polypeptide: Ubiquinone biosynthesis O-methyltransferase (232 aa).

Residues arginine 36, glycine 55, aspartate 76, and leucine 120 each coordinate S-adenosyl-L-methionine.

This sequence belongs to the methyltransferase superfamily. UbiG/COQ3 family.

It catalyses the reaction a 3-demethylubiquinol + S-adenosyl-L-methionine = a ubiquinol + S-adenosyl-L-homocysteine + H(+). The enzyme catalyses a 3-(all-trans-polyprenyl)benzene-1,2-diol + S-adenosyl-L-methionine = a 2-methoxy-6-(all-trans-polyprenyl)phenol + S-adenosyl-L-homocysteine + H(+). It participates in cofactor biosynthesis; ubiquinone biosynthesis. In terms of biological role, O-methyltransferase that catalyzes the 2 O-methylation steps in the ubiquinone biosynthetic pathway. The chain is Ubiquinone biosynthesis O-methyltransferase from Pseudomonas aeruginosa (strain ATCC 15692 / DSM 22644 / CIP 104116 / JCM 14847 / LMG 12228 / 1C / PRS 101 / PAO1).